The sequence spans 147 residues: SsrA-binding protein (147 aa).

Belongs to the SmpB family.

It is found in the cytoplasm. Functionally, required for rescue of stalled ribosomes mediated by trans-translation. Binds to transfer-messenger RNA (tmRNA), required for stable association of tmRNA with ribosomes. tmRNA and SmpB together mimic tRNA shape, replacing the anticodon stem-loop with SmpB. tmRNA is encoded by the ssrA gene; the 2 termini fold to resemble tRNA(Ala) and it encodes a 'tag peptide', a short internal open reading frame. During trans-translation Ala-aminoacylated tmRNA acts like a tRNA, entering the A-site of stalled ribosomes, displacing the stalled mRNA. The ribosome then switches to translate the ORF on the tmRNA; the nascent peptide is terminated with the 'tag peptide' encoded by the tmRNA and targeted for degradation. The ribosome is freed to recommence translation, which seems to be the essential function of trans-translation. This is SsrA-binding protein from Mycoplasmopsis agalactiae (strain NCTC 10123 / CIP 59.7 / PG2) (Mycoplasma agalactiae).